An 89-amino-acid chain; its full sequence is Defensin-like protein 197 (89 aa).

The first 26 residues, 1 to 26, serve as a signal peptide directing secretion; sequence MKFVSVFLVLFIFFLVVLEAPEKIEA. 4 cysteine pairs are disulfide-bonded: cysteine 33/cysteine 86, cysteine 46/cysteine 70, cysteine 55/cysteine 81, and cysteine 59/cysteine 83.

Belongs to the DEFL family. Protease inhibitor I18 (RTI/MTI-2) subfamily.

Its subcellular location is the secreted. The polypeptide is Defensin-like protein 197 (ATTI6) (Arabidopsis thaliana (Mouse-ear cress)).